Reading from the N-terminus, the 205-residue chain is Holliday junction branch migration complex subunit RuvA (205 aa).

The tract at residues 1 to 64 is domain I; that stretch reads MIGRLNGILV…EDAQLLFGFN (64 aa). The tract at residues 65-143 is domain II; it reads NKVERALFRE…NWGNDLFTPF (79 aa). The interval 144 to 156 is flexible linker; the sequence is SDSAVIEPFSDAT. The segment at 157-205 is domain III; the sequence is IANNAADDAVSALVSLGYKLPQAQKAVKSVSKPDMSTEVLIKESLKSML.

Belongs to the RuvA family. Homotetramer. Forms an RuvA(8)-RuvB(12)-Holliday junction (HJ) complex. HJ DNA is sandwiched between 2 RuvA tetramers; dsDNA enters through RuvA and exits via RuvB. An RuvB hexamer assembles on each DNA strand where it exits the tetramer. Each RuvB hexamer is contacted by two RuvA subunits (via domain III) on 2 adjacent RuvB subunits; this complex drives branch migration. In the full resolvosome a probable DNA-RuvA(4)-RuvB(12)-RuvC(2) complex forms which resolves the HJ.

It localises to the cytoplasm. Functionally, the RuvA-RuvB-RuvC complex processes Holliday junction (HJ) DNA during genetic recombination and DNA repair, while the RuvA-RuvB complex plays an important role in the rescue of blocked DNA replication forks via replication fork reversal (RFR). RuvA specifically binds to HJ cruciform DNA, conferring on it an open structure. The RuvB hexamer acts as an ATP-dependent pump, pulling dsDNA into and through the RuvAB complex. HJ branch migration allows RuvC to scan DNA until it finds its consensus sequence, where it cleaves and resolves the cruciform DNA. The protein is Holliday junction branch migration complex subunit RuvA of Pseudoalteromonas translucida (strain TAC 125).